The following is a 77-amino-acid chain: Translation initiation factor IF-1, chloroplastic (77 aa).

The 71-residue stretch at 1–71 (MKEQKLIHEG…TRGRIIYRLR (71 aa)) folds into the S1-like domain.

This sequence belongs to the IF-1 family. Component of the 30S ribosomal translation pre-initiation complex which assembles on the 30S ribosome in the order IF-2 and IF-3, IF-1 and N-formylmethionyl-tRNA(fMet); mRNA recruitment can occur at any time during PIC assembly.

It is found in the plastid. The protein localises to the chloroplast. Functionally, one of the essential components for the initiation of protein synthesis. Stabilizes the binding of IF-2 and IF-3 on the 30S subunit to which N-formylmethionyl-tRNA(fMet) subsequently binds. Helps modulate mRNA selection, yielding the 30S pre-initiation complex (PIC). Upon addition of the 50S ribosomal subunit IF-1, IF-2 and IF-3 are released leaving the mature 70S translation initiation complex. This chain is Translation initiation factor IF-1, chloroplastic, found in Asarum canadense (Wild ginger).